Reading from the N-terminus, the 190-residue chain is dCTP deaminase, dUMP-forming (190 aa).

Residues 101-106 (KSSLGR), D119, 127-129 (TLE), Q148, Y162, K170, and Q174 each bind dCTP. E129 (proton donor/acceptor) is an active-site residue. The interval 160–190 (HPYGSSRAGSKYQGQRGPTPSRSYQNFIRST) is disordered. The segment covering 171–190 (YQGQRGPTPSRSYQNFIRST) has biased composition (polar residues).

Belongs to the dCTP deaminase family. As to quaternary structure, homotrimer.

The catalysed reaction is dCTP + 2 H2O = dUMP + NH4(+) + diphosphate. The protein operates within pyrimidine metabolism; dUMP biosynthesis; dUMP from dCTP: step 1/1. Its function is as follows. Bifunctional enzyme that catalyzes both the deamination of dCTP to dUTP and the hydrolysis of dUTP to dUMP without releasing the toxic dUTP intermediate. In Mycobacterium tuberculosis (strain ATCC 25177 / H37Ra), this protein is dCTP deaminase, dUMP-forming.